The following is a 443-amino-acid chain: COP9 signalosome complex subunit 2 (443 aa).

One can recognise a PCI domain in the interval 254 to 416; it reads AHTDFFEAFK…QLLELDHQKR (163 aa).

The protein belongs to the CSN2 family. As to quaternary structure, component of the CSN complex, probably composed of cops1, cops2, cops3, cops4, cops5, cops6, cops7, cops8 and cops9.

Its subcellular location is the cytoplasm. The protein resides in the nucleus. Essential component of the COP9 signalosome complex (CSN), a complex involved in various cellular and developmental processes. The CSN complex is an essential regulator of the ubiquitin (Ubl) conjugation pathway by mediating the deneddylation of the cullin subunits of E3 ligase complexes, leading to modify the Ubl ligase activity. The sequence is that of COP9 signalosome complex subunit 2 (cops2) from Danio rerio (Zebrafish).